The sequence spans 509 residues: Ribonuclease Y (509 aa).

The chain crosses the membrane as a helical span at residues 5–25 (IAGVSGIAGAAVGAGACYLWL). The region spanning 199–265 (LINLVNLPSD…TRVIEILIED (67 aa)) is the KH domain. Residues 325 to 418 (ALAHTLEVAK…VCAADTLSAA (94 aa)) form the HD domain.

This sequence belongs to the RNase Y family.

It is found in the cell membrane. Its function is as follows. Endoribonuclease that initiates mRNA decay. This chain is Ribonuclease Y, found in Sulfurovum sp. (strain NBC37-1).